Here is a 375-residue protein sequence, read N- to C-terminus: Platelet-derived growth factor receptor-like protein (375 aa).

Residues Met-1 to Gly-21 form the signal peptide. The disordered stretch occupies residues Gln-22 to Thr-64. Residues Pro-40 to Pro-50 show a composition bias toward basic residues. Residues Pro-62–Lys-159 form the Ig-like C2-type 1 domain. Cys-96 and Cys-143 are oxidised to a cystine. Asn-132 and Asn-219 each carry an N-linked (GlcNAc...) asparagine glycan. The Ig-like C2-type 2 domain maps to Pro-272 to Ser-375. Residues Cys-293 and Cys-357 are joined by a disulfide bond.

In terms of assembly, forms a complex composed of PDGFRL, TNK2 and GRB2. As to expression, expressed in colon, lung and liver.

The protein localises to the secreted. This is Platelet-derived growth factor receptor-like protein (PDGFRL) from Homo sapiens (Human).